Here is a 428-residue protein sequence, read N- to C-terminus: Adenylosuccinate synthetase (428 aa).

GTP-binding positions include Gly-12–Lys-18 and Gly-40–Thr-42. Asp-13 acts as the Proton acceptor in catalysis. Mg(2+) is bound by residues Asp-13 and Gly-40. IMP contacts are provided by residues Asp-13–Lys-16, Asn-38–His-41, Thr-130, Arg-144, Gln-225, Thr-240, and Arg-304. Catalysis depends on His-41, which acts as the Proton donor. Substrate is bound at residue Val-300–Arg-306. Residues Arg-306, Lys-332–Asp-334, and Ser-414–Gly-416 contribute to the GTP site.

This sequence belongs to the adenylosuccinate synthetase family. Homodimer. The cofactor is Mg(2+).

The protein resides in the cytoplasm. It catalyses the reaction IMP + L-aspartate + GTP = N(6)-(1,2-dicarboxyethyl)-AMP + GDP + phosphate + 2 H(+). It functions in the pathway purine metabolism; AMP biosynthesis via de novo pathway; AMP from IMP: step 1/2. In terms of biological role, plays an important role in the de novo pathway of purine nucleotide biosynthesis. Catalyzes the first committed step in the biosynthesis of AMP from IMP. The protein is Adenylosuccinate synthetase of Clostridium botulinum (strain ATCC 19397 / Type A).